The following is a 108-amino-acid chain: Glutaredoxin-1 (108 aa).

The 104-residue stretch at 3-106 (EEFVQQRLAN…DILSSIGVLR (104 aa)) folds into the Glutaredoxin domain. Cysteines 23 and 26 form a disulfide.

It belongs to the glutaredoxin family.

Its subcellular location is the virion. Its function is as follows. Has thioltransferase and dehydroascorbate reductase activities. This Cowpox virus (strain GRI-90 / Grishak) (CPV) protein is Glutaredoxin-1 (OPG075).